The primary structure comprises 126 residues: Histone H2B (126 aa).

A compositionally biased stretch (low complexity) spans 1-12 (MPEPAKSAPAPK). The interval 1–36 (MPEPAKSAPAPKKGSKKAVTKTQKKGDKKRKKSRKE) is disordered. Residues K6 and K13 each carry the N6-acetyllysine modification. Positions 13–34 (KGSKKAVTKTQKKGDKKRKKSR) are enriched in basic residues. S15 bears the Phosphoserine mark. Residues K16 and K21 each carry the N6-acetyllysine modification. A Glycyl lysine isopeptide (Lys-Gly) (interchain with G-Cter in ubiquitin) cross-link involves residue K121.

The protein belongs to the histone H2B family. As to quaternary structure, the nucleosome is a histone octamer containing two molecules each of H2A, H2B, H3 and H4 assembled in one H3-H4 heterotetramer and two H2A-H2B heterodimers. The octamer wraps approximately 147 bp of DNA. In terms of processing, monoubiquitination of Lys-121 by the RNF20/40 complex gives a specific tag for epigenetic transcriptional activation and is also prerequisite for histone H3 'Lys-4' and 'Lys-79' methylation. Post-translationally, phosphorylated on Ser-15 during apoptosis; which facilitates apoptotic chromatin condensation.

The protein resides in the nucleus. It localises to the chromosome. Functionally, core component of nucleosome. Nucleosomes wrap and compact DNA into chromatin, limiting DNA accessibility to the cellular machineries which require DNA as a template. Histones thereby play a central role in transcription regulation, DNA repair, DNA replication and chromosomal stability. DNA accessibility is regulated via a complex set of post-translational modifications of histones, also called histone code, and nucleosome remodeling. This Cairina moschata (Muscovy duck) protein is Histone H2B.